Here is a 284-residue protein sequence, read N- to C-terminus: MARIILTAPLFYFFFSLLSHQTMSQPQHMHTFCSVDSFTQTSSYETNRNILLTTLSLTSSLVHYLNATIGLSPDTVYGMFLCRGDINTTSCSDCVQTAAIEIATNCTLNKRAFIYYDECMVRYSNVSFFSEFESKPVIVRYSLRSAPNSNRFNQTLSNKLDQLIPNVSPSTLIPYFVEDQERVTQLEGSYDLVSMIQCSPDLDPSNCTICLRFAYATVSTCCGVPSSALIFTPKCILRYRTFVLPSPAPSPSSLPPISPTSSPPLSLPPQLPPPLSQPPPPLST.

Residues 1–24 (MARIILTAPLFYFFFSLLSHQTMS) form the signal peptide. Gnk2-homologous domains follow at residues 26–128 (PQHM…NVSF) and 134–244 (SKPV…TFVL). Residues 247 to 284 (PAPSPSSLPPISPTSSPPLSLPPQLPPPLSQPPPPLST) form a disordered region.

The protein belongs to the cysteine-rich repeat secretory protein family.

The protein localises to the secreted. This Arabidopsis thaliana (Mouse-ear cress) protein is Putative cysteine-rich repeat secretory protein 7 (CRRSP7).